Here is a 184-residue protein sequence, read N- to C-terminus: Thylakoid membrane protein slr0575 (184 aa).

A run of 2 helical transmembrane segments spans residues 5-25 and 31-51; these read ISLA…GFVA and ATLN…GLAL.

It localises to the cellular thylakoid membrane. This is Thylakoid membrane protein slr0575 from Synechocystis sp. (strain ATCC 27184 / PCC 6803 / Kazusa).